A 100-amino-acid polypeptide reads, in one-letter code: Large ribosomal subunit protein bL21 (100 aa).

It belongs to the bacterial ribosomal protein bL21 family. In terms of assembly, part of the 50S ribosomal subunit. Contacts proteins L15 and L20.

Its function is as follows. Binds directly to 23S rRNA, probably serving to organize its structure. This is Large ribosomal subunit protein bL21 from Deinococcus radiodurans (strain ATCC 13939 / DSM 20539 / JCM 16871 / CCUG 27074 / LMG 4051 / NBRC 15346 / NCIMB 9279 / VKM B-1422 / R1).